We begin with the raw amino-acid sequence, 226 residues long: Cytochrome c biogenesis ATP-binding export protein CcmA (226 aa).

The ABC transporter domain occupies 19 to 226; that stretch reads LRANDLAFSR…LGGAHALPPA (208 aa). 51–58 contributes to the ATP binding site; the sequence is GPNGSGKS.

It belongs to the ABC transporter superfamily. CcmA exporter (TC 3.A.1.107) family. The complex is composed of two ATP-binding proteins (CcmA) and two transmembrane proteins (CcmB).

It localises to the cell inner membrane. The enzyme catalyses heme b(in) + ATP + H2O = heme b(out) + ADP + phosphate + H(+). In terms of biological role, part of the ABC transporter complex CcmAB involved in the biogenesis of c-type cytochromes; once thought to export heme, this seems not to be the case, but its exact role is uncertain. Responsible for energy coupling to the transport system. This is Cytochrome c biogenesis ATP-binding export protein CcmA from Cupriavidus pinatubonensis (strain JMP 134 / LMG 1197) (Cupriavidus necator (strain JMP 134)).